The following is a 197-amino-acid chain: Protein GrpE (197 aa).

The interval 1 to 40 (MSSKEQKTPEGQAPEEIIMDQHEEIEAVEPEASAEQVDPR) is disordered.

It belongs to the GrpE family. Homodimer.

The protein localises to the cytoplasm. In terms of biological role, participates actively in the response to hyperosmotic and heat shock by preventing the aggregation of stress-denatured proteins, in association with DnaK and GrpE. It is the nucleotide exchange factor for DnaK and may function as a thermosensor. Unfolded proteins bind initially to DnaJ; upon interaction with the DnaJ-bound protein, DnaK hydrolyzes its bound ATP, resulting in the formation of a stable complex. GrpE releases ADP from DnaK; ATP binding to DnaK triggers the release of the substrate protein, thus completing the reaction cycle. Several rounds of ATP-dependent interactions between DnaJ, DnaK and GrpE are required for fully efficient folding. The polypeptide is Protein GrpE (Escherichia coli (strain K12 / DH10B)).